We begin with the raw amino-acid sequence, 738 residues long: Eukaryotic translation initiation factor 3 subunit B (738 aa).

Residues 1–120 form a sufficient for interaction with HCR1 and TIF32 region; sequence MCGCVGVISN…LFIQFKTAQM (120 aa). A sufficient for interaction with PIC8 region spans residues 1–245; it reads MCGCVGVISN…GIQSWGGAQF (245 aa). Residues 59 to 146 form the RRM domain; the sequence is NFVVVDGAPI…HRLLVNKLSD (88 aa). 4 WD repeats span residues 211–250, 322–360, 363–406, and 537–579; these read PRKG…SISK, QKEM…LLDK, VKID…QTAR, and VVDK…ENVR.

The protein belongs to the eIF-3 subunit B family. Component of the eukaryotic translation initiation factor 3 (eIF-3) complex.

It is found in the cytoplasm. RNA-binding component of the eukaryotic translation initiation factor 3 (eIF-3) complex, which is involved in protein synthesis of a specialized repertoire of mRNAs and, together with other initiation factors, stimulates binding of mRNA and methionyl-tRNAi to the 40S ribosome. The eIF-3 complex specifically targets and initiates translation of a subset of mRNAs involved in cell proliferation. The sequence is that of Eukaryotic translation initiation factor 3 subunit B from Meyerozyma guilliermondii (strain ATCC 6260 / CBS 566 / DSM 6381 / JCM 1539 / NBRC 10279 / NRRL Y-324) (Yeast).